Consider the following 493-residue polypeptide: Cytochrome P450 710A4 (493 aa).

Residues 5-25 traverse the membrane as a helical segment; it reads VSLFASLTPYLVSALLLFLLL. C435 serves as a coordination point for heme.

Belongs to the cytochrome P450 family. Heme serves as cofactor. As to expression, very weak expression in roots and root hairs. Not detected in the root tips.

It is found in the membrane. The catalysed reaction is 5-dehydroepisterol + NADPH + O2 + H(+) = ergosta-5,7,22,24(28)-tetraen-3beta-ol + NADP(+) + 2 H2O. It functions in the pathway steroid biosynthesis; sterol biosynthesis. In terms of biological role, required to form the C-22 double bond in the sterol side chain. Possesses C-22 desaturase activity toward beta-sitosterol and produces stigmasterol. The chain is Cytochrome P450 710A4 from Arabidopsis thaliana (Mouse-ear cress).